Reading from the N-terminus, the 201-residue chain is Protein GrpE (201 aa).

This sequence belongs to the GrpE family. Homodimer.

The protein resides in the cytoplasm. Its function is as follows. Participates actively in the response to hyperosmotic and heat shock by preventing the aggregation of stress-denatured proteins, in association with DnaK and GrpE. It is the nucleotide exchange factor for DnaK and may function as a thermosensor. Unfolded proteins bind initially to DnaJ; upon interaction with the DnaJ-bound protein, DnaK hydrolyzes its bound ATP, resulting in the formation of a stable complex. GrpE releases ADP from DnaK; ATP binding to DnaK triggers the release of the substrate protein, thus completing the reaction cycle. Several rounds of ATP-dependent interactions between DnaJ, DnaK and GrpE are required for fully efficient folding. This Shewanella frigidimarina (strain NCIMB 400) protein is Protein GrpE.